Consider the following 631-residue polypeptide: tRNA uridine 5-carboxymethylaminomethyl modification enzyme MnmG (631 aa).

FAD-binding positions include 15–20 (GGGHAG), V127, and S182. 275-289 (GPRYCPSIEDKIVRF) is an NAD(+) binding site. An FAD-binding site is contributed by Q372.

It belongs to the MnmG family. As to quaternary structure, homodimer. Heterotetramer of two MnmE and two MnmG subunits. It depends on FAD as a cofactor.

It is found in the cytoplasm. Functionally, NAD-binding protein involved in the addition of a carboxymethylaminomethyl (cmnm) group at the wobble position (U34) of certain tRNAs, forming tRNA-cmnm(5)s(2)U34. In Buchnera aphidicola subsp. Schizaphis graminum (strain Sg), this protein is tRNA uridine 5-carboxymethylaminomethyl modification enzyme MnmG.